Consider the following 21-residue polypeptide: Bombinin-H4 (21 aa).

A D-allo-isoleucine modification is found at Ile2. Ile20 bears the Isoleucine amide mark.

This sequence belongs to the bombinin family. As to expression, expressed by the skin glands.

It is found in the secreted. In terms of biological role, has antimicrobial and hemolytic activities. The protein is Bombinin-H4 of Bombina variegata (Yellow-bellied toad).